Here is a 482-residue protein sequence, read N- to C-terminus: tRNA sulfurtransferase (482 aa).

The THUMP domain maps to 61-165 (LAIRDALTRI…DDRLLLIKGR (105 aa)). ATP contacts are provided by residues 183-184 (LI), Lys265, Gly287, and Gln296. Residues Cys344 and Cys456 are joined by a disulfide bond. The Rhodanese domain maps to 404-482 (FGPNDVILDI…GFNNVKVYRP (79 aa)). Cys456 functions as the Cysteine persulfide intermediate in the catalytic mechanism.

It belongs to the ThiI family.

The protein localises to the cytoplasm. It catalyses the reaction [ThiI sulfur-carrier protein]-S-sulfanyl-L-cysteine + a uridine in tRNA + 2 reduced [2Fe-2S]-[ferredoxin] + ATP + H(+) = [ThiI sulfur-carrier protein]-L-cysteine + a 4-thiouridine in tRNA + 2 oxidized [2Fe-2S]-[ferredoxin] + AMP + diphosphate. It carries out the reaction [ThiS sulfur-carrier protein]-C-terminal Gly-Gly-AMP + S-sulfanyl-L-cysteinyl-[cysteine desulfurase] + AH2 = [ThiS sulfur-carrier protein]-C-terminal-Gly-aminoethanethioate + L-cysteinyl-[cysteine desulfurase] + A + AMP + 2 H(+). It participates in cofactor biosynthesis; thiamine diphosphate biosynthesis. Catalyzes the ATP-dependent transfer of a sulfur to tRNA to produce 4-thiouridine in position 8 of tRNAs, which functions as a near-UV photosensor. Also catalyzes the transfer of sulfur to the sulfur carrier protein ThiS, forming ThiS-thiocarboxylate. This is a step in the synthesis of thiazole, in the thiamine biosynthesis pathway. The sulfur is donated as persulfide by IscS. In Escherichia coli (strain K12 / MC4100 / BW2952), this protein is tRNA sulfurtransferase.